Consider the following 219-residue polypeptide: Ribose-5-phosphate isomerase A (219 aa).

Substrate contacts are provided by residues Ser28–Thr31, Asp81–Asp84, and Lys94–Gly97. Glu103 serves as the catalytic Proton acceptor. A substrate-binding site is contributed by Lys121.

This sequence belongs to the ribose 5-phosphate isomerase family. As to quaternary structure, homodimer.

It catalyses the reaction aldehydo-D-ribose 5-phosphate = D-ribulose 5-phosphate. The protein operates within carbohydrate degradation; pentose phosphate pathway; D-ribose 5-phosphate from D-ribulose 5-phosphate (non-oxidative stage): step 1/1. In terms of biological role, catalyzes the reversible conversion of ribose-5-phosphate to ribulose 5-phosphate. This is Ribose-5-phosphate isomerase A from Glaesserella parasuis serovar 5 (strain SH0165) (Haemophilus parasuis).